We begin with the raw amino-acid sequence, 245 residues long: Uridylate kinase (245 aa).

ATP is bound at residue 15 to 18 (KLSG). Residues 23–28 (GDEGFG) are involved in allosteric activation by GTP. Gly-57 lines the UMP pocket. Residues Gly-58 and Arg-62 each contribute to the ATP site. Residues Asp-77 and 138–145 (TGNPFCTT) contribute to the UMP site. Positions 165, 171, and 174 each coordinate ATP.

The protein belongs to the UMP kinase family. Homohexamer.

It is found in the cytoplasm. The catalysed reaction is UMP + ATP = UDP + ADP. It functions in the pathway pyrimidine metabolism; CTP biosynthesis via de novo pathway; UDP from UMP (UMPK route): step 1/1. Its activity is regulated as follows. Allosterically activated by GTP. Inhibited by UTP. In terms of biological role, catalyzes the reversible phosphorylation of UMP to UDP. In Shewanella sp. (strain W3-18-1), this protein is Uridylate kinase.